Reading from the N-terminus, the 156-residue chain is Histidine-containing phosphotransfer protein 2 (156 aa).

Position 1 is an N-acetylmethionine (Met-1). Residues 40–147 (SPDFVSEVLS…NLEKQIIQAG (108 aa)) form the HPt domain. A Phosphohistidine modification is found at His-82.

In terms of assembly, interacts with the B-type response regulators ARR1, ARR2 and ARR10. Binds to AHK1, AHK2, AHK3, AHK4, AHK5, ETR1 and CKI1. In terms of processing, two-component system major event consists of a His-to-Asp phosphorelay between a sensor histidine kinase (HK) and a response regulator (RR). In plants, the His-to-Asp phosphorelay involves an additional intermediate named Histidine-containing phosphotransfer protein (HPt). This multistep phosphorelay consists of a His-Asp-His-Asp sequential transfer of a phosphate group between first a His and an Asp of the HK protein, followed by the transfer to a conserved His of the HPt protein and finally the transfer to an Asp in the receiver domain of the RR protein. In terms of tissue distribution, strongly expressed in flowers and roots. Detected also in leaves, siliques and stems.

It localises to the cytoplasm. The protein localises to the cytosol. It is found in the nucleus. Its function is as follows. Functions as a two-component phosphorelay mediators between cytokinin sensor histidine kinases and response regulator (B-type ARRs). Plays an important role in propagating cytokinin signal transduction through the multistep His-to-Asp phosphorelay. The protein is Histidine-containing phosphotransfer protein 2 (AHP2) of Arabidopsis thaliana (Mouse-ear cress).